We begin with the raw amino-acid sequence, 290 residues long: Zinc finger matrin-type protein 3 (290 aa).

2 consecutive Matrin-type zinc fingers follow at residues 70-100 and 148-178; these read LFCK…KLRN and DYCK…RLRL. 2 disordered regions span residues 182-203 and 266-290; these read QSHS…EGSE and ESKQ…GYVQ. The Matrin-type 3 zinc-finger motif lies at 246-276; sequence FYCSMCNVGAGEEVEFRQHLESKQHKSKVSE. Over residues 266-283 the composition is skewed to basic and acidic residues; that stretch reads ESKQHKSKVSEQRYRSEM.

As to quaternary structure, interacts with dsRNA. Constitutively expressed in brain and testis. Also expressed in lung, kidney and spleen after whole body gamma irradiation.

The protein resides in the nucleus. The protein localises to the nucleolus. Acts as a bona fide target gene of p53/TP53. May play a role in the TP53-dependent growth regulatory pathway. May contribute to TP53-mediated apoptosis by regulation of TP53 expression and translocation to the nucleus and nucleolus. In Mus musculus (Mouse), this protein is Zinc finger matrin-type protein 3.